Here is a 176-residue protein sequence, read N- to C-terminus: ATP-dependent protease subunit HslV (176 aa).

The active site involves Thr-5. Residues Ala-161, Cys-164, and Thr-167 each contribute to the Na(+) site.

This sequence belongs to the peptidase T1B family. HslV subfamily. In terms of assembly, a double ring-shaped homohexamer of HslV is capped on each side by a ring-shaped HslU homohexamer. The assembly of the HslU/HslV complex is dependent on binding of ATP.

It localises to the cytoplasm. It catalyses the reaction ATP-dependent cleavage of peptide bonds with broad specificity.. With respect to regulation, allosterically activated by HslU binding. Protease subunit of a proteasome-like degradation complex believed to be a general protein degrading machinery. This Pelotomaculum thermopropionicum (strain DSM 13744 / JCM 10971 / SI) protein is ATP-dependent protease subunit HslV.